We begin with the raw amino-acid sequence, 179 residues long: dCTP deaminase (179 aa).

Residues 101–106 (RSTLAR) and aspartate 117 each bind dCTP. The Proton donor/acceptor role is filled by glutamate 127. Glutamine 165 lines the dCTP pocket.

This sequence belongs to the dCTP deaminase family. As to quaternary structure, homotrimer.

The enzyme catalyses dCTP + H2O + H(+) = dUTP + NH4(+). It functions in the pathway pyrimidine metabolism; dUMP biosynthesis; dUMP from dCTP (dUTP route): step 1/2. Functionally, catalyzes the deamination of dCTP to dUTP. The chain is dCTP deaminase from Caldivirga maquilingensis (strain ATCC 700844 / DSM 13496 / JCM 10307 / IC-167).